The chain runs to 685 residues: Protein arginine N-methyltransferase 7 (685 aa).

SAM-dependent MTase PRMT-type domains follow at residues 14–355 (QATW…YSLW) and 364–685 (AESI…LKSI).

It belongs to the class I-like SAM-binding methyltransferase superfamily. Protein arginine N-methyltransferase family. PRMT7 subfamily.

In terms of biological role, essential arginine methyltransferase that can both catalyze the formation of omega-N monomethylarginine (MMA) and symmetrical dimethylarginine (sDMA). Specifically mediates the symmetrical dimethylation of arginine residues in the small nuclear ribonucleoproteins SmD1 and SmD3. This is Protein arginine N-methyltransferase 7 (Art7) from Drosophila willistoni (Fruit fly).